Consider the following 858-residue polypeptide: DNA mismatch repair protein MutS (858 aa).

603–610 (GPNMSGKS) lines the ATP pocket.

The protein belongs to the DNA mismatch repair MutS family.

In terms of biological role, this protein is involved in the repair of mismatches in DNA. It is possible that it carries out the mismatch recognition step. This protein has a weak ATPase activity. The polypeptide is DNA mismatch repair protein MutS (Streptococcus agalactiae serotype Ia (strain ATCC 27591 / A909 / CDC SS700)).